Consider the following 577-residue polypeptide: Eukaryotic translation initiation factor 3 subunit D (577 aa).

The disordered stretch occupies residues 103–177 (DSTKTRFGRG…KDYDKPQRNR (75 aa)). The segment covering 166-177 (GWKDYDKPQRNR) has biased composition (basic and acidic residues). The segment at 305–319 (TLDMVTVNENAADAP) is RNA gate. The disordered stretch occupies residues 558–577 (GSFEDDGEGDVIEENVEEED). Positions 560–577 (FEDDGEGDVIEENVEEED) are enriched in acidic residues.

This sequence belongs to the eIF-3 subunit D family. Component of the eukaryotic translation initiation factor 3 (eIF-3) complex.

Its subcellular location is the cytoplasm. In terms of biological role, mRNA cap-binding component of the eukaryotic translation initiation factor 3 (eIF-3) complex, which is involved in protein synthesis of a specialized repertoire of mRNAs and, together with other initiation factors, stimulates binding of mRNA and methionyl-tRNAi to the 40S ribosome. The eIF-3 complex specifically targets and initiates translation of a subset of mRNAs involved in cell proliferation. In the eIF-3 complex, eif3d specifically recognizes and binds the 7-methylguanosine cap of a subset of mRNAs. The polypeptide is Eukaryotic translation initiation factor 3 subunit D (Sclerotinia sclerotiorum (strain ATCC 18683 / 1980 / Ss-1) (White mold)).